We begin with the raw amino-acid sequence, 481 residues long: MSMTASLALTVPELILSVGALLLLLVAAFGGDGFARAIGWGAVALFAAAGFSLTGPAGNGGPGFDGLYIADSFAAFAKLLIYIAAAVSVAVAPGFFSRTGGGYRAEYPVLILLSGVGMGMMVSAGDLLTLYVGLELQSLSAYVLASFMRRDTRSAEAGLKYFVLGALASGILLYGISLLYGFTGTTLFAGISDSLAKGMGTGQMFGMVFVFAGLAFKISAVPFHMWTPDVYEGAPTPVTAFFASAPKVAGMALLLRVAIEAMGSGTDTWRQIVVFAALASTILGAVAAIGQTSMKRLLAYSSINNVGFALFGLAAGSADGVAATMTYMAVYVAMTLGSFICVLQMRGQDGQPVETIASLSGLSRSRPGLAAAFAIFMFSLAGIPPLFGFWPKFLVFDALVRAGFWPLAMVGIATSVIGAFYYLKIVKTIYFDDPAPAEFAPAASKLEGGLITLAALAVSPLGYLAIPLLDATSMAAARSLF.

13 consecutive transmembrane segments (helical) span residues 14–34 (LILS…GDGF), 38–57 (IGWG…TGPA), 76–96 (FAKL…PGFF), 108–128 (PVLI…GDLL), 162–182 (FVLG…LYGF), 204–224 (MFGM…VPFH), 235–255 (PTPV…ALLL), 272–292 (IVVF…IGQT), 297–317 (LLAY…AAGS), 323–343 (ATMT…ICVL), 369–389 (LAAA…LFGF), 403–423 (GFWP…FYYL), and 449–469 (GLIT…IPLL).

Belongs to the complex I subunit 2 family. In terms of assembly, NDH-1 is composed of 14 different subunits. Subunits NuoA, H, J, K, L, M, N constitute the membrane sector of the complex.

It localises to the cell inner membrane. The enzyme catalyses a quinone + NADH + 5 H(+)(in) = a quinol + NAD(+) + 4 H(+)(out). Functionally, NDH-1 shuttles electrons from NADH, via FMN and iron-sulfur (Fe-S) centers, to quinones in the respiratory chain. The immediate electron acceptor for the enzyme in this species is believed to be ubiquinone. Couples the redox reaction to proton translocation (for every two electrons transferred, four hydrogen ions are translocated across the cytoplasmic membrane), and thus conserves the redox energy in a proton gradient. This chain is NADH-quinone oxidoreductase subunit N, found in Rhizorhabdus wittichii (strain DSM 6014 / CCUG 31198 / JCM 15750 / NBRC 105917 / EY 4224 / RW1) (Sphingomonas wittichii).